The primary structure comprises 115 residues: Non-specific lipid-transfer protein 4.3 (115 aa).

Residues 1-25 (MARAAATQLVLVAMVAAMLLVATDA) form the signal peptide. Cystine bridges form between Cys-29/Cys-77, Cys-39/Cys-54, Cys-55/Cys-97, and Cys-75/Cys-111.

The protein belongs to the plant LTP family.

Plant non-specific lipid-transfer proteins transfer phospholipids as well as galactolipids across membranes. May play a role in wax or cutin deposition in the cell walls of expanding epidermal cells and certain secretory tissues. The chain is Non-specific lipid-transfer protein 4.3 (LTP4.3) from Hordeum vulgare (Barley).